The chain runs to 1414 residues: DNA-directed RNA polymerase subunit beta'' (1414 aa).

Residues Cys220, Cys293, Cys300, and Cys303 each coordinate Zn(2+).

It belongs to the RNA polymerase beta' chain family. RpoC2 subfamily. In terms of assembly, in plastids the minimal PEP RNA polymerase catalytic core is composed of four subunits: alpha, beta, beta', and beta''. When a (nuclear-encoded) sigma factor is associated with the core the holoenzyme is formed, which can initiate transcription. Zn(2+) is required as a cofactor.

Its subcellular location is the plastid. It is found in the chloroplast. It catalyses the reaction RNA(n) + a ribonucleoside 5'-triphosphate = RNA(n+1) + diphosphate. Its function is as follows. DNA-dependent RNA polymerase catalyzes the transcription of DNA into RNA using the four ribonucleoside triphosphates as substrates. The protein is DNA-directed RNA polymerase subunit beta'' of Angiopteris evecta (Mule's foot fern).